Here is a 483-residue protein sequence, read N- to C-terminus: Bromoperoxidase-catalase (483 aa).

The segment at 1–24 (MTQGPLTTEAGAPVADNQNSETAG) is disordered. Catalysis depends on residues H54 and N127. Y337 is a heme binding site.

The protein belongs to the catalase family.

The enzyme catalyses 2 H2O2 = O2 + 2 H2O. The protein is Bromoperoxidase-catalase (bca) of Streptomyces venezuelae (strain ATCC 10712 / CBS 650.69 / DSM 40230 / JCM 4526 / NBRC 13096 / PD 04745).